The chain runs to 322 residues: HPr kinase/phosphorylase (322 aa).

Catalysis depends on residues His146 and Lys167. An ATP-binding site is contributed by 161 to 168 (GDSGLGKS). Ser168 lines the Mg(2+) pocket. The active-site Proton acceptor; for phosphorylation activity. Proton donor; for dephosphorylation activity is Asp185. Residues 209-218 (LEVRGLGLLD) are important for the catalytic mechanism of both phosphorylation and dephosphorylation. Residue Glu210 coordinates Mg(2+). Residue Arg250 is part of the active site. An important for the catalytic mechanism of dephosphorylation region spans residues 271-276 (QVAAGR).

Belongs to the HPrK/P family. Homohexamer. Mg(2+) is required as a cofactor.

The enzyme catalyses [HPr protein]-L-serine + ATP = [HPr protein]-O-phospho-L-serine + ADP + H(+). The catalysed reaction is [HPr protein]-O-phospho-L-serine + phosphate + H(+) = [HPr protein]-L-serine + diphosphate. In terms of biological role, catalyzes the ATP- as well as the pyrophosphate-dependent phosphorylation of a specific serine residue in HPr, a phosphocarrier protein of the phosphoenolpyruvate-dependent sugar phosphotransferase system (PTS). HprK/P also catalyzes the pyrophosphate-producing, inorganic phosphate-dependent dephosphorylation (phosphorolysis) of seryl-phosphorylated HPr (P-Ser-HPr). This chain is HPr kinase/phosphorylase, found in Burkholderia mallei (strain NCTC 10247).